A 296-amino-acid chain; its full sequence is MKFQDMILSLNQFWGEQGCIIAQPYDMEKGAGTFNPNTFLRALGPEPWKVAYIEPSRRPTDGRYGENPNRLQHYFQYQVIIKPSPDNIQELYLQSLERLGVNPKEHDIRFVEDNWESPTLGAWGLGWEVWLDGMEVTQFTYFQQCGGIDCKPVCAEITYGLERLAMYIQNKESVYDIEYVGDITYGDIYLQNEIDYSHYNFEAADVEALQTWFEMYEKEAIRIVEKGLVLPAYDYVLKCSHTFNLLDARGAISVTERTGYIARVRNLARLCAQAYVEQRERLGYPLLKEQSGKEAE.

This sequence belongs to the class-II aminoacyl-tRNA synthetase family. As to quaternary structure, tetramer of two alpha and two beta subunits.

It localises to the cytoplasm. It catalyses the reaction tRNA(Gly) + glycine + ATP = glycyl-tRNA(Gly) + AMP + diphosphate. This is Glycine--tRNA ligase alpha subunit from Desulfitobacterium hafniense (strain DSM 10664 / DCB-2).